Here is a 104-residue protein sequence, read N- to C-terminus: U20-lycotoxin-Ls1d (104 aa).

Positions 1–30 (MFSTSDQVSKMNSRILSALLILGIATCVIA) are cleaved as a signal peptide. Positions 31–76 (GGFCPKSRHPQCNLSYKINDCCAQSDCRVGSVCCVEGCGNVCRAES) constitute a WAP domain. Disulfide bonds link Cys-34-Cys-64, Cys-42-Cys-68, Cys-51-Cys-63, Cys-52-Cys-90, and Cys-57-Cys-72.

This sequence belongs to the venom protein 11 family. 02 (wap-2) subfamily. Contains 5 disulfide bonds. In terms of tissue distribution, expressed by the venom gland.

Its subcellular location is the secreted. Its function is as follows. Has antibacterial activity. This chain is U20-lycotoxin-Ls1d, found in Lycosa singoriensis (Wolf spider).